Consider the following 146-residue polypeptide: Large ribosomal subunit protein uL11 (146 aa).

This sequence belongs to the universal ribosomal protein uL11 family. In terms of assembly, part of the ribosomal stalk of the 50S ribosomal subunit. Interacts with L10 and the large rRNA to form the base of the stalk. L10 forms an elongated spine to which L12 dimers bind in a sequential fashion forming a multimeric L10(L12)X complex. One or more lysine residues are methylated.

In terms of biological role, forms part of the ribosomal stalk which helps the ribosome interact with GTP-bound translation factors. This chain is Large ribosomal subunit protein uL11, found in Wolbachia pipientis wMel.